A 157-amino-acid polypeptide reads, in one-letter code: 2-C-methyl-D-erythritol 2,4-cyclodiphosphate synthase (157 aa).

A divalent metal cation is bound by residues Asp8 and His10. Residues 8–10 (DVH) and 34–35 (HS) contribute to the 4-CDP-2-C-methyl-D-erythritol 2-phosphate site. Residue His42 coordinates a divalent metal cation. Residues 56-58 (DIG), 61-65 (FPDTD), 132-135 (TTTE), Phe139, and Arg142 contribute to the 4-CDP-2-C-methyl-D-erythritol 2-phosphate site.

Belongs to the IspF family. In terms of assembly, homotrimer. The cofactor is a divalent metal cation.

The enzyme catalyses 4-CDP-2-C-methyl-D-erythritol 2-phosphate = 2-C-methyl-D-erythritol 2,4-cyclic diphosphate + CMP. It participates in isoprenoid biosynthesis; isopentenyl diphosphate biosynthesis via DXP pathway; isopentenyl diphosphate from 1-deoxy-D-xylulose 5-phosphate: step 4/6. In terms of biological role, involved in the biosynthesis of isopentenyl diphosphate (IPP) and dimethylallyl diphosphate (DMAPP), two major building blocks of isoprenoid compounds. Catalyzes the conversion of 4-diphosphocytidyl-2-C-methyl-D-erythritol 2-phosphate (CDP-ME2P) to 2-C-methyl-D-erythritol 2,4-cyclodiphosphate (ME-CPP) with a corresponding release of cytidine 5-monophosphate (CMP). The chain is 2-C-methyl-D-erythritol 2,4-cyclodiphosphate synthase from Geotalea uraniireducens (strain Rf4) (Geobacter uraniireducens).